We begin with the raw amino-acid sequence, 227 residues long: Cytochrome c oxidase subunit 2 (227 aa).

Residues 1–14 (MAHPMQLGFQDAAS) are Mitochondrial intermembrane-facing. Residues 15 to 45 (PIMEELLYFHDHTLMIVFMISSLVLYIISLM) form a helical membrane-spanning segment. Topologically, residues 46–59 (LSTELTHTSTMDAQ) are mitochondrial matrix. The helical transmembrane segment at 60-87 (EVETVWTILPAVILILIALPSLRILYMM) threads the bilayer. At 88-227 (DEINTPSMTL…YFEEWLLKSL (140 aa)) the chain is on the mitochondrial intermembrane side. His-161, Cys-196, Glu-198, Cys-200, His-204, and Met-207 together coordinate Cu cation. Glu-198 serves as a coordination point for Mg(2+). Residue Tyr-218 is modified to Phosphotyrosine.

Belongs to the cytochrome c oxidase subunit 2 family. As to quaternary structure, component of the cytochrome c oxidase (complex IV, CIV), a multisubunit enzyme composed of 14 subunits. The complex is composed of a catalytic core of 3 subunits MT-CO1, MT-CO2 and MT-CO3, encoded in the mitochondrial DNA, and 11 supernumerary subunits COX4I, COX5A, COX5B, COX6A, COX6B, COX6C, COX7A, COX7B, COX7C, COX8 and NDUFA4, which are encoded in the nuclear genome. The complex exists as a monomer or a dimer and forms supercomplexes (SCs) in the inner mitochondrial membrane with NADH-ubiquinone oxidoreductase (complex I, CI) and ubiquinol-cytochrome c oxidoreductase (cytochrome b-c1 complex, complex III, CIII), resulting in different assemblies (supercomplex SCI(1)III(2)IV(1) and megacomplex MCI(2)III(2)IV(2)). Found in a complex with TMEM177, COA6, COX18, COX20, SCO1 and SCO2. Interacts with TMEM177 in a COX20-dependent manner. Interacts with COX20. Interacts with COX16. It depends on Cu cation as a cofactor.

The protein localises to the mitochondrion inner membrane. It carries out the reaction 4 Fe(II)-[cytochrome c] + O2 + 8 H(+)(in) = 4 Fe(III)-[cytochrome c] + 2 H2O + 4 H(+)(out). Its function is as follows. Component of the cytochrome c oxidase, the last enzyme in the mitochondrial electron transport chain which drives oxidative phosphorylation. The respiratory chain contains 3 multisubunit complexes succinate dehydrogenase (complex II, CII), ubiquinol-cytochrome c oxidoreductase (cytochrome b-c1 complex, complex III, CIII) and cytochrome c oxidase (complex IV, CIV), that cooperate to transfer electrons derived from NADH and succinate to molecular oxygen, creating an electrochemical gradient over the inner membrane that drives transmembrane transport and the ATP synthase. Cytochrome c oxidase is the component of the respiratory chain that catalyzes the reduction of oxygen to water. Electrons originating from reduced cytochrome c in the intermembrane space (IMS) are transferred via the dinuclear copper A center (CU(A)) of subunit 2 and heme A of subunit 1 to the active site in subunit 1, a binuclear center (BNC) formed by heme A3 and copper B (CU(B)). The BNC reduces molecular oxygen to 2 water molecules using 4 electrons from cytochrome c in the IMS and 4 protons from the mitochondrial matrix. The polypeptide is Cytochrome c oxidase subunit 2 (MT-CO2) (Nycticebus coucang (Slow loris)).